A 514-amino-acid chain; its full sequence is Glutathione-binding protein GsiB (514 aa).

Positions M1 to A27 are cleaved as a signal peptide.

It belongs to the bacterial solute-binding protein 5 family. As to quaternary structure, the complex is composed of two ATP-binding proteins (GsiA), two transmembrane proteins (GsiC and GsiD) and a solute-binding protein (GsiB).

The protein localises to the periplasm. Its function is as follows. Part of the ABC transporter complex GsiABCD involved in glutathione import. Binds glutathione. This chain is Glutathione-binding protein GsiB, found in Pectobacterium atrosepticum (strain SCRI 1043 / ATCC BAA-672) (Erwinia carotovora subsp. atroseptica).